The primary structure comprises 424 residues: Serine--tRNA ligase (424 aa).

L-serine is bound at residue 231 to 233 (TAE). 262-264 (RSE) contacts ATP. E285 lines the L-serine pocket. 349–352 (EISS) provides a ligand contact to ATP. L-serine is bound at residue S385.

This sequence belongs to the class-II aminoacyl-tRNA synthetase family. Type-1 seryl-tRNA synthetase subfamily. As to quaternary structure, homodimer. The tRNA molecule binds across the dimer.

It localises to the cytoplasm. The enzyme catalyses tRNA(Ser) + L-serine + ATP = L-seryl-tRNA(Ser) + AMP + diphosphate + H(+). It carries out the reaction tRNA(Sec) + L-serine + ATP = L-seryl-tRNA(Sec) + AMP + diphosphate + H(+). The protein operates within aminoacyl-tRNA biosynthesis; selenocysteinyl-tRNA(Sec) biosynthesis; L-seryl-tRNA(Sec) from L-serine and tRNA(Sec): step 1/1. Catalyzes the attachment of serine to tRNA(Ser). Is also able to aminoacylate tRNA(Sec) with serine, to form the misacylated tRNA L-seryl-tRNA(Sec), which will be further converted into selenocysteinyl-tRNA(Sec). This Bacillus cereus (strain G9842) protein is Serine--tRNA ligase.